A 573-amino-acid chain; its full sequence is Urease subunit alpha (573 aa).

The Urease domain occupies 136 to 573; it reads GAIDCHVHFI…LPMAQRYFLF (438 aa). Ni(2+)-binding residues include His-141, His-143, and Lys-224. Lys-224 is modified (N6-carboxylysine). His-226 contacts substrate. 2 residues coordinate Ni(2+): His-253 and His-279. His-327 (proton donor) is an active-site residue. Asp-367 contributes to the Ni(2+) binding site.

This sequence belongs to the metallo-dependent hydrolases superfamily. Urease alpha subunit family. As to quaternary structure, heterotrimer of UreA (gamma), UreB (beta) and UreC (alpha) subunits. Three heterotrimers associate to form the active enzyme. Ni cation serves as cofactor. In terms of processing, carboxylation allows a single lysine to coordinate two nickel ions.

Its subcellular location is the cytoplasm. It catalyses the reaction urea + 2 H2O + H(+) = hydrogencarbonate + 2 NH4(+). It participates in nitrogen metabolism; urea degradation; CO(2) and NH(3) from urea (urease route): step 1/1. This is Urease subunit alpha from Nocardia farcinica (strain IFM 10152).